A 448-amino-acid chain; its full sequence is Phosphoglucosamine mutase (448 aa).

The active-site Phosphoserine intermediate is the S100. Residues S100, D240, D242, and D244 each contribute to the Mg(2+) site. S100 is subject to Phosphoserine.

It belongs to the phosphohexose mutase family. Mg(2+) serves as cofactor. In terms of processing, activated by phosphorylation.

The catalysed reaction is alpha-D-glucosamine 1-phosphate = D-glucosamine 6-phosphate. Its function is as follows. Catalyzes the conversion of glucosamine-6-phosphate to glucosamine-1-phosphate. The chain is Phosphoglucosamine mutase from Clostridium perfringens (strain SM101 / Type A).